The chain runs to 514 residues: Xylose import ATP-binding protein XylG (514 aa).

2 consecutive ABC transporter domains span residues 7–246 and 263–508; these read FEMR…VGRE and LEAR…IHAE. ATP is bound at residue 39 to 46; that stretch reads GENGAGKS.

It belongs to the ABC transporter superfamily. Xylose importer (TC 3.A.1.2.4) family. The complex is composed of two ATP-binding proteins (XylG), two transmembrane proteins (XylH) and a solute-binding protein (XylF).

The protein resides in the cell inner membrane. It catalyses the reaction D-xylose(out) + ATP + H2O = D-xylose(in) + ADP + phosphate + H(+). Functionally, part of the ABC transporter complex XylFGH involved in xylose import. Responsible for energy coupling to the transport system. This Ralstonia nicotianae (strain ATCC BAA-1114 / GMI1000) (Ralstonia solanacearum) protein is Xylose import ATP-binding protein XylG.